Here is a 394-residue protein sequence, read N- to C-terminus: Ceramide glucosyltransferase-A (394 aa).

Residues 1–10 (MAVLDLALQG) are Lumenal-facing. Residues 11–32 (LAIFGCVLFFVLWFMHFLSIVY) traverse the membrane as a helical segment. At 33–195 (TRLHLNKKIS…QVYFGTSHPR (163 aa)) the chain is on the cytoplasmic side. Position 92 (Asp-92) is a short sequence motif, D1. A short sequence motif (D2) is located at residue Asp-144. A helical transmembrane segment spans residues 196–215 (SYISANVTGFKCVTGMSCLM). Over 216–287 (RKEVLDQAGG…KLRINMLPAT (72 aa)) the chain is Lumenal. Asp-236 is a short sequence motif (D3). Catalysis depends on Asp-236, which acts as the Proton acceptor. Positions 272–276 (RMIRW) match the (Q/R)XXRW motif. The helical transmembrane segment at 288-304 (IICEPISECFVASLIIG) threads the bilayer. Over 305 to 309 (WAAHH) the chain is Cytoplasmic. Residues 310–328 (IFRWDIMVFFMCHCLAWFI) form a helical membrane-spanning segment. Residues 329–348 (FDYIQLRGVQGGPLNFSKLD) lie on the Lumenal side of the membrane. The chain crosses the membrane as a helical span at residues 349 to 369 (YAVAWFIRESMTIYIFLSALW). Residues 370–394 (DPTISWRTGRFRLRCGGTAEEILDV) are Cytoplasmic-facing.

It belongs to the glycosyltransferase 2 family. In terms of tissue distribution, at the late gastrula stage, weakly expressed ubiquitously. As neurulation proceeds (stages 15-16), expression moves towards the dorsal structures: involuted paraxial mesoderm and neural folds. In the tailbud embryo (stage 28), expression is restricted to the notochord. At later stages (stage 35), expression remains in the notochord and also appears weakly in the cephalic region.

The protein localises to the golgi apparatus membrane. It catalyses the reaction an N-acylsphing-4-enine + UDP-alpha-D-glucose = a beta-D-glucosyl-(1&lt;-&gt;1')-N-acylsphing-4-enine + UDP + H(+). It carries out the reaction UDP-alpha-D-xylose + an N-acylsphing-4-enine = a beta-D-xylosyl-(1&lt;-&gt;1')-N-acylsphing-4-enine + UDP + H(+). The enzyme catalyses N-(9Z-octadecenoyl)-sphing-4-enine + UDP-alpha-D-xylose = beta-D-xylosyl-(1&lt;-&gt;1')-N-(9Z-octadecenoyl)-sphing-4-enine + UDP + H(+). The protein operates within lipid metabolism; sphingolipid metabolism. Its function is as follows. Participates in the initial step of the glucosylceramide-based glycosphingolipid/GSL synthetic pathway at the cytosolic surface of the Golgi. Catalyzes the transfer of glucose from UDP-glucose to ceramide to produce glucosylceramide/GlcCer (such as beta-D-glucosyl-(1&lt;-&gt;1')-N-acylsphing-4-enine). Glucosylceramide is the core component of glycosphingolipids/GSLs, amphipathic molecules consisting of a ceramide lipid moiety embedded in the outer leaflet of the membrane, linked to one of hundreds of different externally oriented oligosaccharide structures. Glycosphingolipids are essential components of membrane microdomains that mediate membrane trafficking and signal transduction. They are implicated in many fundamental cellular processes, including growth, differentiation, migration, morphogenesis, cell-to-cell and cell-to-matrix interactions. Glycosphingolipids are required for convergence extension movements during early development. Catalyzes the synthesis of xylosylceramide/XylCer (such as beta-D-xylosyl-(1&lt;-&gt;1')-N-acylsphing-4-enine) using UDP-Xyl as xylose donor. This Xenopus laevis (African clawed frog) protein is Ceramide glucosyltransferase-A (ugcg-a).